A 437-amino-acid chain; its full sequence is Epsilon-sarcoglycan (437 aa).

Topologically, residues methionine 1 to phenylalanine 317 are extracellular. A glycan (N-linked (GlcNAc...) asparagine) is linked at asparagine 200. The helical transmembrane segment at leucine 318–isoleucine 338 threads the bilayer. Residues methionine 339 to proline 437 lie on the Cytoplasmic side of the membrane.

This sequence belongs to the sarcoglycan alpha/epsilon family. N-glycosylated. Post-translationally, ubiquitinated, leading to its degradation by the proteasome.

The protein resides in the cell membrane. Its subcellular location is the sarcolemma. It localises to the cytoplasm. It is found in the cytoskeleton. The protein localises to the cell projection. The protein resides in the dendrite. Its subcellular location is the golgi apparatus. Component of the sarcoglycan complex, a subcomplex of the dystrophin-glycoprotein complex which forms a link between the F-actin cytoskeleton and the extracellular matrix. This chain is Epsilon-sarcoglycan, found in Pongo abelii (Sumatran orangutan).